The primary structure comprises 157 residues: Peptide methionine sulfoxide reductase MsrA (157 aa).

Cys10 is an active-site residue.

This sequence belongs to the MsrA Met sulfoxide reductase family.

The catalysed reaction is L-methionyl-[protein] + [thioredoxin]-disulfide + H2O = L-methionyl-(S)-S-oxide-[protein] + [thioredoxin]-dithiol. It catalyses the reaction [thioredoxin]-disulfide + L-methionine + H2O = L-methionine (S)-S-oxide + [thioredoxin]-dithiol. Functionally, has an important function as a repair enzyme for proteins that have been inactivated by oxidation. Catalyzes the reversible oxidation-reduction of methionine sulfoxide in proteins to methionine. The sequence is that of Peptide methionine sulfoxide reductase MsrA from Clostridium perfringens (strain ATCC 13124 / DSM 756 / JCM 1290 / NCIMB 6125 / NCTC 8237 / Type A).